A 100-amino-acid polypeptide reads, in one-letter code: Replication restart protein PriB (100 aa).

The 99-residue stretch at 1-99 (MGFNNLVSLA…LRIQNIKEYK (99 aa)) folds into the SSB domain.

This sequence belongs to the PriB family. As to quaternary structure, homodimer. Interacts with PriA and DnaT. Component of the replication restart primosome. Primosome assembly occurs via a 'hand-off' mechanism. PriA binds to replication forks, subsequently PriB then DnaT bind; DnaT then displaces ssDNA to generate the helicase loading substrate.

In terms of biological role, involved in the restart of stalled replication forks, which reloads the replicative helicase on sites other than the origin of replication; the PriA-PriB pathway is the major replication restart pathway. During primosome assembly it facilitates complex formation between PriA and DnaT on DNA; stabilizes PriA on DNA. Stimulates the DNA unwinding activity of PriA helicase. The protein is Replication restart protein PriB of Neisseria meningitidis serogroup C (strain 053442).